We begin with the raw amino-acid sequence, 162 residues long: Selenoprotein F (162 aa).

Residues 1-28 (MAARRDGWLGPAFGLRLLLATVLQTVSA) form the signal peptide. A non-standard amino acid (selenocysteine) is located at residue selenocysteine 93.

The protein belongs to the selenoprotein M/F family. In terms of assembly, forms a tight complex with UGGT1/UGCGL1. Interacts with UGGT2/UGCGL2. Interacts with RDH11.

The protein resides in the endoplasmic reticulum lumen. May be involved in redox reactions associated with the formation of disulfide bonds. May contribute to the quality control of protein folding in the endoplasmic reticulum. May regulate protein folding by enhancing the catalytic activity of UGGT1/UGCGL1 and UGGT2/UGCGL2. The sequence is that of Selenoprotein F from Bos taurus (Bovine).